Consider the following 348-residue polypeptide: Putative methylthioribose-1-phosphate isomerase (348 aa).

Substrate is bound by residues 55-57, Arg-98, and Gln-203; that span reads RGA. The active-site Proton donor is Asp-244. 253–254 provides a ligand contact to substrate; that stretch reads NK.

Belongs to the eIF-2B alpha/beta/delta subunits family. MtnA subfamily.

It catalyses the reaction 5-(methylsulfanyl)-alpha-D-ribose 1-phosphate = 5-(methylsulfanyl)-D-ribulose 1-phosphate. Its function is as follows. Catalyzes the interconversion of methylthioribose-1-phosphate (MTR-1-P) into methylthioribulose-1-phosphate (MTRu-1-P). This is Putative methylthioribose-1-phosphate isomerase from Methanosarcina acetivorans (strain ATCC 35395 / DSM 2834 / JCM 12185 / C2A).